Reading from the N-terminus, the 466-residue chain is Citrate synthase, mitochondrial (466 aa).

The transit peptide at 1–27 (MALLTAAARLLGTKNASCLVLAARHAS) directs the protein to the mitochondrion. The short motif at 2 to 21 (ALLTAAARLLGTKNASCLVL) is the SIFI-degron element. Residue K57 is modified to N6-succinyllysine. K76 is subject to N6-acetyllysine; alternate. K76 is modified (N6-succinyllysine; alternate). Residues K103 and K193 each carry the N6-succinyllysine modification. H301 is an active-site residue. N6-acetyllysine; alternate occurs at positions 321 and 327. K321 and K327 each carry N6-succinyllysine; alternate. The active site involves H347. Position 356 (R356) interacts with oxaloacetate. N6-acetyllysine; alternate is present on K375. An N6-succinyllysine; alternate modification is found at K375. N6-acetyllysine is present on K382. An N6-acetyllysine; alternate modification is found at K393. K393 is modified (N6-succinyllysine; alternate). K395 carries the N6,N6,N6-trimethyllysine modification. D402 is a catalytic residue. The oxaloacetate site is built by R428 and R448. K450 carries the N6-succinyllysine modification. K459 is modified (N6-acetyllysine; alternate). K459 bears the N6-succinyllysine; alternate mark.

The protein belongs to the citrate synthase family. Homodimer. In terms of processing, methylated. Trimethylation at Lys-395 by CSKMT decreases citrate synthase activity. Post-translationally, in response to mitochondrial stress, the precursor protein is ubiquitinated by the SIFI complex in the cytoplasm before mitochondrial import, leading to its degradation. Within the SIFI complex, UBR4 initiates ubiquitin chain that are further elongated or branched by KCMF1.

It localises to the mitochondrion matrix. The catalysed reaction is oxaloacetate + acetyl-CoA + H2O = citrate + CoA + H(+). It participates in carbohydrate metabolism; tricarboxylic acid cycle; isocitrate from oxaloacetate: step 1/2. Its function is as follows. Key enzyme of the Krebs tricarboxylic acid cycle which catalyzes the synthesis of citrate from acetyl coenzyme A and oxaloacetate. This chain is Citrate synthase, mitochondrial (CS), found in Homo sapiens (Human).